The chain runs to 160 residues: Ribonuclease HI (160 aa).

The RNase H type-1 domain occupies 4-147; that stretch reads TPNSVTLYTD…CDRLAVAAYQ (144 aa). 4 residues coordinate Mg(2+): Asp13, Glu52, Asp74, and Asp139.

It belongs to the RNase H family. As to quaternary structure, monomer. Requires Mg(2+) as cofactor.

The protein resides in the cytoplasm. The catalysed reaction is Endonucleolytic cleavage to 5'-phosphomonoester.. Functionally, endonuclease that specifically degrades the RNA of RNA-DNA hybrids. The sequence is that of Ribonuclease HI (rnhA) from Synechocystis sp. (strain ATCC 27184 / PCC 6803 / Kazusa).